We begin with the raw amino-acid sequence, 558 residues long: 2-isopropylmalate synthase (558 aa).

Residues 30–303 enclose the Pyruvate carboxyltransferase domain; it reads PIWCSVDLRD…DPKLDFSNIP (274 aa). Positions 39, 242, 244, and 278 each coordinate Mg(2+). Positions 438–558 are regulatory domain; it reads LNNTLCVQDF…GLVSALNRII (121 aa).

Belongs to the alpha-IPM synthase/homocitrate synthase family. LeuA type 2 subfamily. As to quaternary structure, homodimer. The cofactor is Mg(2+).

It localises to the cytoplasm. It catalyses the reaction 3-methyl-2-oxobutanoate + acetyl-CoA + H2O = (2S)-2-isopropylmalate + CoA + H(+). It participates in amino-acid biosynthesis; L-leucine biosynthesis; L-leucine from 3-methyl-2-oxobutanoate: step 1/4. In terms of biological role, catalyzes the condensation of the acetyl group of acetyl-CoA with 3-methyl-2-oxobutanoate (2-ketoisovalerate) to form 3-carboxy-3-hydroxy-4-methylpentanoate (2-isopropylmalate). The protein is 2-isopropylmalate synthase of Helicobacter hepaticus (strain ATCC 51449 / 3B1).